The sequence spans 426 residues: 3-phosphoshikimate 1-carboxyvinyltransferase (426 aa).

3-phosphoshikimate is bound by residues Lys-22, Ser-23, and Arg-27. Phosphoenolpyruvate is bound at residue Lys-22. 2 residues coordinate phosphoenolpyruvate: Gly-96 and Arg-124. Residues Ser-170, Ser-171, Gln-172, Ser-198, Asp-314, Asn-337, and Lys-341 each contribute to the 3-phosphoshikimate site. Residue Gln-172 coordinates phosphoenolpyruvate. Residue Asp-314 is the Proton acceptor of the active site. Phosphoenolpyruvate-binding residues include Arg-345, Arg-387, and Lys-412.

The protein belongs to the EPSP synthase family. As to quaternary structure, monomer.

Its subcellular location is the cytoplasm. The catalysed reaction is 3-phosphoshikimate + phosphoenolpyruvate = 5-O-(1-carboxyvinyl)-3-phosphoshikimate + phosphate. The protein operates within metabolic intermediate biosynthesis; chorismate biosynthesis; chorismate from D-erythrose 4-phosphate and phosphoenolpyruvate: step 6/7. Functionally, catalyzes the transfer of the enolpyruvyl moiety of phosphoenolpyruvate (PEP) to the 5-hydroxyl of shikimate-3-phosphate (S3P) to produce enolpyruvyl shikimate-3-phosphate and inorganic phosphate. This Shewanella oneidensis (strain ATCC 700550 / JCM 31522 / CIP 106686 / LMG 19005 / NCIMB 14063 / MR-1) protein is 3-phosphoshikimate 1-carboxyvinyltransferase.